The primary structure comprises 928 residues: Outer membrane protein SlpA (928 aa).

Residues 1–23 form the signal peptide; sequence MKKRLVTLLAGLLTVLSMGFGLA. Residues 24 to 84 form the SLH domain; the sequence is QFSDVPAGHW…QQIEEELKTQ (61 aa).

As to quaternary structure, homotrimer.

Its subcellular location is the cell outer membrane. Plays an important role in the structural organization and integrity of the cell envelope, bridging the outer membrane to the peptidoglyan layer. Appears to be a nonselective channel. The protein is Outer membrane protein SlpA (slpA) of Thermus thermophilus (strain ATCC 27634 / DSM 579 / HB8).